A 348-amino-acid chain; its full sequence is Dihydroorotase (348 aa).

Histidine 14 and histidine 16 together coordinate Zn(2+). Residues 16–18 (HLR) and asparagine 42 contribute to the substrate site. Zn(2+) contacts are provided by lysine 100, histidine 137, and histidine 175. Lysine 100 bears the N6-carboxylysine mark. Residue histidine 137 participates in substrate binding. Residue leucine 220 participates in substrate binding. A Zn(2+)-binding site is contributed by aspartate 248. The active site involves aspartate 248. Substrate is bound by residues histidine 252 and alanine 264.

Belongs to the metallo-dependent hydrolases superfamily. DHOase family. Class II DHOase subfamily. As to quaternary structure, homodimer. It depends on Zn(2+) as a cofactor.

The catalysed reaction is (S)-dihydroorotate + H2O = N-carbamoyl-L-aspartate + H(+). The protein operates within pyrimidine metabolism; UMP biosynthesis via de novo pathway; (S)-dihydroorotate from bicarbonate: step 3/3. Catalyzes the reversible cyclization of carbamoyl aspartate to dihydroorotate. The protein is Dihydroorotase of Synechococcus sp. (strain CC9605).